A 937-amino-acid polypeptide reads, in one-letter code: Protein SEY1 homolog (937 aa).

Topologically, residues 1-848 (MEKGVEKTQI…ETGSKMSLKN (848 aa)) are cytoplasmic. In terms of domain architecture, GB1/RHD3-type G spans 34–280 (GFSYNVIAVL…IPSDGFAQYC (247 aa)). Residue 44–51 (GSQSSGKS) participates in GTP binding. Coiled-coil stretches lie at residues 319-339 (NKEIKEKSIESHNKVIENFKE) and 725-750 (YLDEIMDVLKNKLDEISENLATIIIQ). The helical transmembrane segment at 849–869 (VPVVFWIILLLFGWNEILFFI) threads the bilayer. Topologically, residues 870–872 (RMF) are lumenal. Residues 873-893 (FKLNVILPLFFAAAFIVSTFV) form a helical membrane-spanning segment. Over 894 to 937 (YNGNTQALSYINKIIFYMAKNSYNFFKHIQAISNPPPKNVQKQE) the chain is Cytoplasmic.

Belongs to the TRAFAC class dynamin-like GTPase superfamily. GB1/RHD3 GTPase family. RHD3 subfamily.

Its subcellular location is the endoplasmic reticulum membrane. Its function is as follows. Probable GTP-binding protein involved in generating and maintaining the structure of the tubular endoplasmic reticulum network. This chain is Protein SEY1 homolog, found in Plasmodium falciparum (isolate 3D7).